A 458-amino-acid chain; its full sequence is Ribosomal protein uS12 methylthiotransferase RimO (458 aa).

The MTTase N-terminal domain occupies 6 to 116 (PKVGFVSLGC…VMEAVHAALP (111 aa)). Positions 15, 51, 80, 147, 151, and 154 each coordinate [4Fe-4S] cluster. The Radical SAM core domain occupies 133–371 (LTPRHYAYLK…AKQAQISALR (239 aa)). In terms of domain architecture, TRAM spans 373–441 (ESKIGSVQQC…EHDLFGDALP (69 aa)).

This sequence belongs to the methylthiotransferase family. RimO subfamily. [4Fe-4S] cluster serves as cofactor.

It is found in the cytoplasm. The catalysed reaction is L-aspartate(89)-[ribosomal protein uS12]-hydrogen + (sulfur carrier)-SH + AH2 + 2 S-adenosyl-L-methionine = 3-methylsulfanyl-L-aspartate(89)-[ribosomal protein uS12]-hydrogen + (sulfur carrier)-H + 5'-deoxyadenosine + L-methionine + A + S-adenosyl-L-homocysteine + 2 H(+). In terms of biological role, catalyzes the methylthiolation of an aspartic acid residue of ribosomal protein uS12. This Xanthomonas euvesicatoria pv. vesicatoria (strain 85-10) (Xanthomonas campestris pv. vesicatoria) protein is Ribosomal protein uS12 methylthiotransferase RimO.